The sequence spans 265 residues: Undecaprenyl-diphosphatase (265 aa).

The next 8 helical transmembrane spans lie at 1–21 (MDWL…FLPI), 40–60 (GLAF…LAFH), 87–107 (WAVI…ENVI), 113–133 (ASLV…WADV), 151–173 (IIGF…TITA), 188–208 (SFLL…VELI), 214–234 (VAWG…WLCI), and 244–264 (IGML…LVWV).

Belongs to the UppP family.

The protein localises to the cell inner membrane. The enzyme catalyses di-trans,octa-cis-undecaprenyl diphosphate + H2O = di-trans,octa-cis-undecaprenyl phosphate + phosphate + H(+). In terms of biological role, catalyzes the dephosphorylation of undecaprenyl diphosphate (UPP). Confers resistance to bacitracin. This chain is Undecaprenyl-diphosphatase, found in Chromohalobacter salexigens (strain ATCC BAA-138 / DSM 3043 / CIP 106854 / NCIMB 13768 / 1H11).